Consider the following 649-residue polypeptide: Choline transporter-like protein 3 (649 aa).

Residues 33 to 53 (AWLFLFFLFWTGLVFIMGYSV) traverse the membrane as a helical segment. N-linked (GlcNAc...) asparagine glycans are attached at residues asparagine 136 and asparagine 151. Transmembrane regions (helical) follow at residues 213–233 (DTVL…MFTF), 235–255 (FITT…LLFV), 284–304 (LLGF…LIYV), 334–354 (LWTF…LLSL), and 384–404 (LIGL…AVAG). Residues asparagine 414, asparagine 502, and asparagine 520 are each glycosylated (N-linked (GlcNAc...) asparagine). 2 helical membrane passes run 533 to 553 (FIIF…GLMA) and 562 to 582 (VWAV…HSFL).

Belongs to the CTL (choline transporter-like) family.

Its subcellular location is the membrane. The protein is Choline transporter-like protein 3 (SLC44A3) of Bos taurus (Bovine).